A 609-amino-acid polypeptide reads, in one-letter code: Glutamine--fructose-6-phosphate aminotransferase [isomerizing] (609 aa).

Residue cysteine 2 is the Nucleophile; for GATase activity of the active site. The Glutamine amidotransferase type-2 domain maps to 2–218 (CGIVGAIAQR…EGDIAEITRR (217 aa)). SIS domains are found at residues 286–426 (ADEL…LKGL) and 458–599 (LAED…VDQP). Lysine 604 serves as the catalytic For Fru-6P isomerization activity.

Homodimer.

The protein localises to the cytoplasm. It catalyses the reaction D-fructose 6-phosphate + L-glutamine = D-glucosamine 6-phosphate + L-glutamate. In terms of biological role, catalyzes the first step in hexosamine metabolism, converting fructose-6P into glucosamine-6P using glutamine as a nitrogen source. The polypeptide is Glutamine--fructose-6-phosphate aminotransferase [isomerizing] (Escherichia coli O157:H7).